Here is a 96-residue protein sequence, read N- to C-terminus: Large ribosomal subunit protein uL23cz (96 aa).

The protein belongs to the universal ribosomal protein uL23 family. As to quaternary structure, part of the 50S ribosomal subunit.

The protein localises to the plastid. Its subcellular location is the chloroplast. Its function is as follows. Binds to 23S rRNA. In Sorghum bicolor (Sorghum), this protein is Large ribosomal subunit protein uL23cz (rpl23-A).